Here is a 156-residue protein sequence, read N- to C-terminus: Single-stranded DNA-binding protein 1 (156 aa).

The SSB domain maps to 1 to 107; sequence MNETMICAVG…IDAVAIGHDL (107 aa). Low complexity predominate over residues 114 to 124; it reads FRRTARTEAST. The segment at 114-156 is disordered; it reads FRRTARTEASTSPPRPEPNWEVPAGGTPGEPVPEQRPDPVPVG.

In terms of assembly, homotetramer.

The sequence is that of Single-stranded DNA-binding protein 1 (ssb1) from Streptomyces coelicolor (strain ATCC BAA-471 / A3(2) / M145).